The sequence spans 137 residues: Methylglyoxal synthase (137 aa).

One can recognise an MGS-like domain in the interval 1–137 (MKIALIAHDK…NLVRGGEPNV (137 aa)). Substrate-binding positions include H8, K12, 34–37 (TGTT), and 54–55 (SG). D60 serves as the catalytic Proton donor/acceptor. H87 provides a ligand contact to substrate.

The protein belongs to the methylglyoxal synthase family.

The enzyme catalyses dihydroxyacetone phosphate = methylglyoxal + phosphate. In terms of biological role, catalyzes the formation of methylglyoxal from dihydroxyacetone phosphate. The chain is Methylglyoxal synthase from Bacillus velezensis (strain DSM 23117 / BGSC 10A6 / LMG 26770 / FZB42) (Bacillus amyloliquefaciens subsp. plantarum).